A 1231-amino-acid chain; its full sequence is Protein FAM193A (1231 aa).

Residues 106–142 (CTEDMYSTLLQRYQRSEEELRKVAEEWLECQKRIDAY) adopt a coiled-coil conformation. The interval 249-272 (DYLSEMRPPSVSSASSGSGSSSPI) is disordered. A compositionally biased stretch (low complexity) spans 258–270 (SVSSASSGSGSSS). Residue Ser293 is modified to Phosphoserine. Disordered stretches follow at residues 331 to 405 (NGGG…QAEQ), 633 to 703 (QSSS…APSF), 719 to 789 (SFCP…NQKE), 826 to 845 (LTKR…EREG), and 860 to 1174 (NSSE…SSLD). The span at 355–365 (EADDEDADGES) shows a compositional bias: acidic residues. At Ser648 the chain carries Phosphoserine. Residues 676–691 (LAPLPALSPSALSPAS) show a composition bias toward low complexity. Acidic residues predominate over residues 761–773 (QQDDGDESADEDS). Positions 776-785 (EHSSSTSTST) are enriched in low complexity. A compositionally biased stretch (basic residues) spans 872–881 (AAKRARHKQR). Residues 877–973 (RHKQRKLEEK…ATESISNSEN (97 aa)) are a coiled coil. Over residues 882-909 (KLEEKARLEAEARAREHLHHQEEQKQRE) the composition is skewed to basic and acidic residues. The segment covering 910 to 920 (EEEDEEEEDEE) has biased composition (acidic residues). Residues 921–935 (QHFKEEFQRLQELQK) show a composition bias toward basic and acidic residues. Basic residues predominate over residues 937–946 (RAAKKKKKDR). Positions 962-979 (QAATESISNSENIHNGSL) are enriched in polar residues. Phosphoserine is present on residues Ser1136 and Ser1151. Residues 1156-1166 (GKNKKNKKKKG) are compositionally biased toward basic residues.

The protein belongs to the FAM193 family.

The sequence is that of Protein FAM193A (Fam193a) from Mus musculus (Mouse).